We begin with the raw amino-acid sequence, 157 residues long: Transcriptional repressor NrdR (157 aa).

The segment at 3–34 is a zinc-finger region; it reads CPFCGFADTRVIDSRLGKEGNNIRRRRECSQC. The 91-residue stretch at 49 to 139 folds into the ATP-cone domain; that stretch reads PLIIKKDARR…VYRQFKDINE (91 aa).

This sequence belongs to the NrdR family. Zn(2+) is required as a cofactor.

In terms of biological role, negatively regulates transcription of bacterial ribonucleotide reductase nrd genes and operons by binding to NrdR-boxes. This is Transcriptional repressor NrdR from Syntrophotalea carbinolica (strain DSM 2380 / NBRC 103641 / GraBd1) (Pelobacter carbinolicus).